The sequence spans 125 residues: Inner membrane protein YbjM (125 aa).

Residues 1-6 (MKHKQR) are Cytoplasmic-facing. Residues 7–27 (WAGAICCFVLFIVVCLFLATH) traverse the membrane as a helical segment. Residues 28-34 (MKGAFRA) lie on the Periplasmic side of the membrane. A helical transmembrane segment spans residues 35 to 55 (AGHPEIGLLFFILPGAVASFF). Residues 56-64 (SQRREVLKP) are Cytoplasmic-facing. Residues 65-85 (LFGAMLAAPCSMLIMRLFFSP) traverse the membrane as a helical segment. Topologically, residues 86-92 (TRSFWQE) are periplasmic. The helical transmembrane segment at 93 to 113 (LAWLLSAVFWCALGALCFLFI) threads the bilayer. Topologically, residues 114–125 (SSLFKPQHRKNQ) are cytoplasmic.

The protein localises to the cell inner membrane. The chain is Inner membrane protein YbjM (ybjM) from Escherichia coli O157:H7.